Consider the following 299-residue polypeptide: ATP phosphoribosyltransferase (299 aa).

It belongs to the ATP phosphoribosyltransferase family. Long subfamily. Equilibrium between an active dimeric form, an inactive hexameric form and higher aggregates. Interconversion between the various forms is largely reversible and is influenced by the natural substrates and inhibitors of the enzyme. The cofactor is Mg(2+).

It localises to the cytoplasm. It carries out the reaction 1-(5-phospho-beta-D-ribosyl)-ATP + diphosphate = 5-phospho-alpha-D-ribose 1-diphosphate + ATP. It functions in the pathway amino-acid biosynthesis; L-histidine biosynthesis; L-histidine from 5-phospho-alpha-D-ribose 1-diphosphate: step 1/9. Its activity is regulated as follows. Feedback inhibited by histidine. Functionally, catalyzes the condensation of ATP and 5-phosphoribose 1-diphosphate to form N'-(5'-phosphoribosyl)-ATP (PR-ATP). Has a crucial role in the pathway because the rate of histidine biosynthesis seems to be controlled primarily by regulation of HisG enzymatic activity. The protein is ATP phosphoribosyltransferase of Yersinia pseudotuberculosis serotype O:1b (strain IP 31758).